The following is a 193-amino-acid chain: 3-isopropylmalate dehydratase small subunit (193 aa).

The protein belongs to the LeuD family. LeuD type 1 subfamily. As to quaternary structure, heterodimer of LeuC and LeuD.

The catalysed reaction is (2R,3S)-3-isopropylmalate = (2S)-2-isopropylmalate. The protein operates within amino-acid biosynthesis; L-leucine biosynthesis; L-leucine from 3-methyl-2-oxobutanoate: step 2/4. In terms of biological role, catalyzes the isomerization between 2-isopropylmalate and 3-isopropylmalate, via the formation of 2-isopropylmaleate. The protein is 3-isopropylmalate dehydratase small subunit of Bacillus cytotoxicus (strain DSM 22905 / CIP 110041 / 391-98 / NVH 391-98).